We begin with the raw amino-acid sequence, 248 residues long: MNGLGMQKFEHPLNERTRIYLRIESLLRKLGHSADLTQPYEYQVFFSSLFHMLDILEQVQVKADLGKDLEKLRLQYRAWMNIEGVDQSALLSVLEQISQVHQNLMQTTRPGHSLKEDRFLSALKQRFFIPGGDCCFDLPALHHWLHLPLDVRCRNTHNWMSQLLSLSDALSLWLRLTRETARYTPQIARNGFMQSEMENSNLLRLEIPIDQGVYPMISGHKSRFALRFMSFETNKNCEKDIEFTLAVC.

This sequence belongs to the ZapD family. Interacts with FtsZ.

The protein localises to the cytoplasm. Its function is as follows. Cell division factor that enhances FtsZ-ring assembly. Directly interacts with FtsZ and promotes bundling of FtsZ protofilaments, with a reduction in FtsZ GTPase activity. The chain is Cell division protein ZapD from Aliivibrio salmonicida (strain LFI1238) (Vibrio salmonicida (strain LFI1238)).